A 566-amino-acid polypeptide reads, in one-letter code: Oxygen-dependent choline dehydrogenase (566 aa).

Residue 7-36 (DYIICGAGSAGNVLATRLTEDPNVTVLLLE) coordinates FAD. The disordered stretch occupies residues 185–204 (EGFGPMDRTVTPKGRRASTA). Catalysis depends on histidine 474, which acts as the Proton acceptor.

It belongs to the GMC oxidoreductase family. FAD is required as a cofactor.

It catalyses the reaction choline + A = betaine aldehyde + AH2. It carries out the reaction betaine aldehyde + NAD(+) + H2O = glycine betaine + NADH + 2 H(+). It functions in the pathway amine and polyamine biosynthesis; betaine biosynthesis via choline pathway; betaine aldehyde from choline (cytochrome c reductase route): step 1/1. Functionally, involved in the biosynthesis of the osmoprotectant glycine betaine. Catalyzes the oxidation of choline to betaine aldehyde and betaine aldehyde to glycine betaine at the same rate. The protein is Oxygen-dependent choline dehydrogenase of Burkholderia vietnamiensis (strain G4 / LMG 22486) (Burkholderia cepacia (strain R1808)).